The following is a 223-amino-acid chain: MKNIQKNIKKLKQKITNISKKFKINTQKIKLLAVSKNRSVNDIKKAILCGQNSFGENYVQESQPKIKLFNNIEWHYIGQIQSNKAHIIAKNFSWCHTITNKKTAVLLNKYRPYSLPKLNTLIQINIRDNTINIDDDIETIKQLAKTINSLDNLNLRGIMAMPYFKNTYLEQIQSYKYIHLYFDILKKKYTYIDTVSLGTSHDIQAALYSGSTLLRIGSSIFDV.

N6-(pyridoxal phosphate)lysine is present on lysine 36.

This sequence belongs to the pyridoxal phosphate-binding protein YggS/PROSC family. Monomer.

Its function is as follows. Pyridoxal 5'-phosphate (PLP)-binding protein, which is involved in PLP homeostasis. This Buchnera aphidicola subsp. Baizongia pistaciae (strain Bp) protein is Pyridoxal phosphate homeostasis protein.